The sequence spans 529 residues: Bifunctional purine biosynthesis protein PurH (529 aa).

One can recognise an MGS-like domain in the interval 1 to 148 (MQQRRPVRRA…KNHKDVAIVV (148 aa)). At Lys-287 the chain carries N6-acetyllysine.

It belongs to the PurH family.

It carries out the reaction (6R)-10-formyltetrahydrofolate + 5-amino-1-(5-phospho-beta-D-ribosyl)imidazole-4-carboxamide = 5-formamido-1-(5-phospho-D-ribosyl)imidazole-4-carboxamide + (6S)-5,6,7,8-tetrahydrofolate. The enzyme catalyses IMP + H2O = 5-formamido-1-(5-phospho-D-ribosyl)imidazole-4-carboxamide. It participates in purine metabolism; IMP biosynthesis via de novo pathway; 5-formamido-1-(5-phospho-D-ribosyl)imidazole-4-carboxamide from 5-amino-1-(5-phospho-D-ribosyl)imidazole-4-carboxamide (10-formyl THF route): step 1/1. The protein operates within purine metabolism; IMP biosynthesis via de novo pathway; IMP from 5-formamido-1-(5-phospho-D-ribosyl)imidazole-4-carboxamide: step 1/1. In Escherichia coli O17:K52:H18 (strain UMN026 / ExPEC), this protein is Bifunctional purine biosynthesis protein PurH.